We begin with the raw amino-acid sequence, 411 residues long: Dual-specificity RNA methyltransferase RlmN (411 aa).

The active-site Proton acceptor is the E125. The Radical SAM core domain maps to E131–L380. An intrachain disulfide couples C138 to C383. Residues C145, C149, and C152 each coordinate [4Fe-4S] cluster. S-adenosyl-L-methionine contacts are provided by residues G209–E210, S241, S263–H265, and N340. C383 (S-methylcysteine intermediate) is an active-site residue.

The protein belongs to the radical SAM superfamily. RlmN family. The cofactor is [4Fe-4S] cluster.

It is found in the cytoplasm. It carries out the reaction adenosine(2503) in 23S rRNA + 2 reduced [2Fe-2S]-[ferredoxin] + 2 S-adenosyl-L-methionine = 2-methyladenosine(2503) in 23S rRNA + 5'-deoxyadenosine + L-methionine + 2 oxidized [2Fe-2S]-[ferredoxin] + S-adenosyl-L-homocysteine. The catalysed reaction is adenosine(37) in tRNA + 2 reduced [2Fe-2S]-[ferredoxin] + 2 S-adenosyl-L-methionine = 2-methyladenosine(37) in tRNA + 5'-deoxyadenosine + L-methionine + 2 oxidized [2Fe-2S]-[ferredoxin] + S-adenosyl-L-homocysteine. Functionally, specifically methylates position 2 of adenine 2503 in 23S rRNA and position 2 of adenine 37 in tRNAs. m2A2503 modification seems to play a crucial role in the proofreading step occurring at the peptidyl transferase center and thus would serve to optimize ribosomal fidelity. This Brucella suis biovar 1 (strain 1330) protein is Dual-specificity RNA methyltransferase RlmN.